A 180-amino-acid polypeptide reads, in one-letter code: Small ribosomal subunit protein uS4 (180 aa).

Residues 103-174 (RRLQTIVYKK…HPERMMIEKA (72 aa)) enclose the S4 RNA-binding domain.

It belongs to the universal ribosomal protein uS4 family. As to quaternary structure, part of the 30S ribosomal subunit. Contacts protein S5. The interaction surface between S4 and S5 is involved in control of translational fidelity.

Its function is as follows. One of the primary rRNA binding proteins, it binds directly to 16S rRNA where it nucleates assembly of the body of the 30S subunit. Functionally, with S5 and S12 plays an important role in translational accuracy. This chain is Small ribosomal subunit protein uS4, found in Pyrococcus abyssi (strain GE5 / Orsay).